The primary structure comprises 146 residues: 3-dehydroquinate dehydratase (146 aa).

Tyrosine 22 acts as the Proton acceptor in catalysis. Positions 73, 79, and 86 each coordinate substrate. The Proton donor role is filled by histidine 99. Substrate contacts are provided by residues 100–101 (LS) and arginine 110.

This sequence belongs to the type-II 3-dehydroquinase family. As to quaternary structure, homododecamer.

It catalyses the reaction 3-dehydroquinate = 3-dehydroshikimate + H2O. It functions in the pathway metabolic intermediate biosynthesis; chorismate biosynthesis; chorismate from D-erythrose 4-phosphate and phosphoenolpyruvate: step 3/7. Functionally, catalyzes a trans-dehydration via an enolate intermediate. This chain is 3-dehydroquinate dehydratase, found in Synechococcus sp. (strain CC9605).